The following is a 636-amino-acid chain: MEKYSAESIKVLKGLEPVRMRPGMYIGSTGKRGLHHLVYEVVDNSVDEALAGYCDWIRVTLHEDGSVEVEDNGRGIPVDIHPEEGRSALEVVFTVLHAGGKFSKDSYKISGGLHGVGVSVVNALSEWLEVRVHRDGKIYRQRYERGKPVTPVEVIGETDKHGTIVRFKPDPLIFSETEFDPDILEHRLREIAFLVPGLKIEFEDRINGEKKTFKFDGGIVEYVKYLNRGKKALHDVIHIKRTEKVKTKNGEDEVIVEIAFQYTDSYSEDIVSFANTIKTVDGGTHVTAFKSTLTRLMNEYGKKHNFLKKDDSFQGEDVREGLTAVISVYVKNPEFEGQTKSKLGNEEVKEAVTKAMREELKKIFDANPELVKTILSKIMSTKQAREAAKRAREMVRRKNVLQNTTLPGKLADCSSTHREKTELFIVEGDSAGGSAKQARDREFQAVLPIRGKILNVEKSSLDRLLKNEQISDIIVAVGTGIGDDFDESKLRYGRIIIMTDADIDGAHIRTLLLTLFYRYMRPLIEQGRVYIALPPLYRIKAGREEFYVYSDQELAEYKEKLQGKRIEIQRYKGLGEMNPEQLWETTMNPETRKIIRVTIEDAEEADRLFEILMGNDPSSRREFIERHALKVKELDI.

In terms of domain architecture, Toprim spans 421–535; sequence TELFIVEGDS…QGRVYIALPP (115 aa). The Mg(2+) site is built by E427, D500, and D502.

The protein belongs to the type II topoisomerase GyrB family. Heterotetramer, composed of two GyrA and two GyrB chains. In the heterotetramer, GyrA contains the active site tyrosine that forms a transient covalent intermediate with DNA, while GyrB binds cofactors and catalyzes ATP hydrolysis. It depends on Mg(2+) as a cofactor. The cofactor is Mn(2+). Ca(2+) is required as a cofactor.

It localises to the cytoplasm. It catalyses the reaction ATP-dependent breakage, passage and rejoining of double-stranded DNA.. In terms of biological role, a type II topoisomerase that negatively supercoils closed circular double-stranded (ds) DNA in an ATP-dependent manner to modulate DNA topology and maintain chromosomes in an underwound state. Negative supercoiling favors strand separation, and DNA replication, transcription, recombination and repair, all of which involve strand separation. Also able to catalyze the interconversion of other topological isomers of dsDNA rings, including catenanes and knotted rings. Type II topoisomerases break and join 2 DNA strands simultaneously in an ATP-dependent manner. This Thermotoga maritima (strain ATCC 43589 / DSM 3109 / JCM 10099 / NBRC 100826 / MSB8) protein is DNA gyrase subunit B.